The following is a 355-amino-acid chain: uncharacterized protein (355 aa).

Transmembrane regions (helical) follow at residues Ser275 to Phe295, Trp301 to Val321, and Ile330 to Leu350.

It to M.tuberculosis Rv0497.

The protein resides in the cell membrane. This is an uncharacterized protein from Mycobacterium leprae (strain TN).